We begin with the raw amino-acid sequence, 560 residues long: E3 SUMO-protein ligase CBX4 (560 aa).

Residues 1–75 (MELPAVGEHV…LMGYRKRGPK (75 aa)) are involved in interaction with H3C15 and H3C1. Positions 1–539 (MELPAVGEHV…LSEFKPFFGN (539 aa)) are interaction with BMI1. The Chromo domain occupies 11–69 (FAVESIEKKRIRKGRVEYLVKWRGWSPKYNTWEPEENILDPRLLIAFQNRERQEQLMGY). Residues lysine 77, lysine 106, lysine 114, and lysine 125 each participate in a glycyl lysine isopeptide (Lys-Gly) (interchain with G-Cter in SUMO2) cross-link. A disordered region spans residues 92 to 152 (VLTGLQDSST…PPGKSGKYYY (61 aa)). Residue lysine 149 is modified to N6-acetyllysine; alternate. Lysine 149 participates in a covalent cross-link: Glycyl lysine isopeptide (Lys-Gly) (interchain with G-Cter in SUMO2); alternate. Residues lysine 157, lysine 167, and lysine 178 each participate in a glycyl lysine isopeptide (Lys-Gly) (interchain with G-Cter in SUMO2) cross-link. Residue serine 182 is modified to Phosphoserine. Glycyl lysine isopeptide (Lys-Gly) (interchain with G-Cter in SUMO2) cross-links involve residues lysine 191, lysine 205, lysine 212, lysine 223, lysine 249, lysine 268, lysine 278, and lysine 280. The interval 217 to 243 (AAGAPGKGSEKGPPNGMMPAPKEAVTG) is disordered. Basic and acidic residues-rich tracts occupy residues 281–291 (SGEVAEGEARS) and 298–331 (AADERHPPADRTFKKAAGAEEKKVEAPPKRREEE). A disordered region spans residues 281–404 (SGEVAEGEAR…HHHHHHAVGL (124 aa)). Residues lysine 320, lysine 352, and lysine 365 each participate in a glycyl lysine isopeptide (Lys-Gly) (interchain with G-Cter in SUMO2) cross-link. The segment covering 380–401 (PSHHPHPHPHHHHHHHHHHHHA) has biased composition (basic residues). At serine 467 the chain carries Phosphoserine. Lysine 494 participates in a covalent cross-link: Glycyl lysine isopeptide (Lys-Gly) (interchain with G-Cter in SUMO2); alternate. Lysine 494 is covalently cross-linked (Glycyl lysine isopeptide (Lys-Gly) (interchain with G-Cter in SUMO); alternate). Position 497 is a phosphothreonine; by HIPK2 (threonine 497). Residues 509–521 (AAPTTTAEKPPAE) show a composition bias toward low complexity. Residues 509 to 528 (AAPTTTAEKPPAEAQDEPAE) are disordered. The involved in interaction with H3C15 and RNF2 stretch occupies residues 531–556 (SEFKPFFGNIIITDVTANCLTVTFKE). Positions 540–560 (IIITDVTANCLTVTFKEYVTV) are interaction with RNF2.

Interacts with histone H3-K9Me3. Interacts with CHTOP. Component of a PRC1-like complex. The composition of the PRC1 complex differs between the PRC1 complex in pluripotent embryonic stem cells containing RNF2, CBX7 and PCGF2, and the PRC1 complex in differentiating cells containing RNF2, CBX2, CBX4 and BMI1. Self-associates. Interacts with SUV39H1 and HIPK2. Interacts with CSNK2B. May interact with H3C15, H3C1 and RNF2. Interacts with SUMO1P1/SUMO5. Interacts with PRDM1/Blimp-1. Post-translationally, ubiquitinated. Ubiquitination regulates the function of the Polycomb group (PcG) multiprotein PRC1-like complex. Deubiquitinated by USP26. Phosphorylated on Thr-497 by HIPK2 upon DNA damage. This phosphorylation stimulates E3 SUMO-protein ligase activity and promotes sumoylation on Lys-494, as well as sumoylation of other target proteins, such as HNRNPK. In terms of tissue distribution, ubiquitous.

The protein resides in the nucleus. It is found in the nucleus speckle. It functions in the pathway protein modification; protein sumoylation. E3 SUMO-protein ligase that catalyzes sumoylation of target proteins by promoting the transfer of SUMO from the E2 enzyme to the substrate. Involved in the sumoylation of HNRNPK, a p53/TP53 transcriptional coactivator, hence indirectly regulates p53/TP53 transcriptional activation resulting in p21/CDKN1A expression. Monosumoylates ZNF131. Functionally, component of a Polycomb group (PcG) multiprotein PRC1-like complex, a complex class required to maintain the transcriptionally repressive state of many genes, including Hox genes, throughout development. PcG PRC1 complex acts via chromatin remodeling and modification of histones; it mediates monoubiquitination of histone H2A 'Lys-119', rendering chromatin heritably changed in its expressibility. Binds to histone H3 trimethylated at 'Lys-9' (H3K9me3). Plays a role in the lineage differentiation of the germ layers in embryonic development. This chain is E3 SUMO-protein ligase CBX4 (CBX4), found in Homo sapiens (Human).